The following is a 291-amino-acid chain: Elongation factor Ts (291 aa).

The interval 79–82 (TDFV) is involved in Mg(2+) ion dislocation from EF-Tu.

This sequence belongs to the EF-Ts family.

The protein localises to the cytoplasm. In terms of biological role, associates with the EF-Tu.GDP complex and induces the exchange of GDP to GTP. It remains bound to the aminoacyl-tRNA.EF-Tu.GTP complex up to the GTP hydrolysis stage on the ribosome. The protein is Elongation factor Ts of Anaplasma marginale (strain Florida).